The following is a 501-amino-acid chain: Sarpagan bridge enzyme (501 aa).

A helical; Signal-anchor for type II membrane protein transmembrane segment spans residues 3 to 23 (VMQLSFSYPALFLFVFFLFML). Cys-441 is a binding site for heme.

It belongs to the cytochrome P450 family. The cofactor is heme. Highly expressed in roots. Expressed at low levels in stems.

Its subcellular location is the endoplasmic reticulum membrane. It catalyses the reaction (19E)-geissoschizine + reduced [NADPH--hemoprotein reductase] + O2 = polyneuridine aldehyde + oxidized [NADPH--hemoprotein reductase] + 2 H2O + H(+). The enzyme catalyses tetrahydroalstonine + A + reduced [NADPH--hemoprotein reductase] + O2 = alstonine + AH2 + oxidized [NADPH--hemoprotein reductase] + 2 H2O + H(+). The catalysed reaction is ajmalicine + A + reduced [NADPH--hemoprotein reductase] + O2 = serpentine + AH2 + oxidized [NADPH--hemoprotein reductase] + 2 H2O + H(+). It participates in alkaloid biosynthesis; ajmaline biosynthesis. Monooxygenase involved in the biosynthesis of ajmaline-type monoterpenoid indole alkaloids (MIAs) natural products, important plant-derived pharmaceuticals used in the therapy of heart disorders. Converts by cyclization the strictosidine-derived geissoschizine to the sarpagan alkaloid polyneuridine aldehyde, precursor of vomilenine, an intermediate chemical in the biosynthesis of ajmaline. Converts by aromatization the tetrahydro-beta-carboline alkaloids tetrahydroalstonine and ajmalicine to the corresponding beta-carboline alkaloids alstonine and serpentine, respectively. The protein is Sarpagan bridge enzyme of Gelsemium sempervirens (Carolina jasmine).